Consider the following 419-residue polypeptide: Imidazolonepropionase (419 aa).

Fe(3+)-binding residues include histidine 87 and histidine 89. 2 residues coordinate Zn(2+): histidine 87 and histidine 89. Residues arginine 96, tyrosine 159, and histidine 192 each coordinate 4-imidazolone-5-propanoate. Residue tyrosine 159 participates in N-formimidoyl-L-glutamate binding. Fe(3+) is bound at residue histidine 257. A Zn(2+)-binding site is contributed by histidine 257. A 4-imidazolone-5-propanoate-binding site is contributed by glutamine 260. Position 332 (aspartate 332) interacts with Fe(3+). A Zn(2+)-binding site is contributed by aspartate 332. N-formimidoyl-L-glutamate-binding residues include asparagine 334 and glycine 336. Serine 337 contributes to the 4-imidazolone-5-propanoate binding site.

It belongs to the metallo-dependent hydrolases superfamily. HutI family. The cofactor is Zn(2+). Requires Fe(3+) as cofactor.

It localises to the cytoplasm. It carries out the reaction 4-imidazolone-5-propanoate + H2O = N-formimidoyl-L-glutamate. It functions in the pathway amino-acid degradation; L-histidine degradation into L-glutamate; N-formimidoyl-L-glutamate from L-histidine: step 3/3. In terms of biological role, catalyzes the hydrolytic cleavage of the carbon-nitrogen bond in imidazolone-5-propanoate to yield N-formimidoyl-L-glutamate. It is the third step in the universal histidine degradation pathway. The protein is Imidazolonepropionase of Alteromonas mediterranea (strain DSM 17117 / CIP 110805 / LMG 28347 / Deep ecotype).